We begin with the raw amino-acid sequence, 72 residues long: Cytochrome b-c1 complex subunit 8-1, mitochondrial (72 aa).

At 1–41 the chain is on the mitochondrial matrix side; sequence MGKQPVKLKAVVYALSPFQQKIMTGLWKDLPEKIHHKVSEN. Residues 42–58 form a helical membrane-spanning segment; the sequence is WISATLLVTPVVGTYWY. At 59–72 the chain is on the mitochondrial intermembrane side; sequence AQYFKEQEKLEHRF.

Belongs to the UQCRQ/QCR8 family. In terms of assembly, component of the ubiquinol-cytochrome c oxidoreductase (cytochrome b-c1 complex, complex III, CIII), a multisubunit enzyme composed of 10 subunits. The complex is composed of 3 respiratory subunits cytochrome b (MT-CYB), cytochrome c1 (CYC1-1 or CYC1-2) and Rieske protein (UCR1-1 or UCR1-2), 2 core protein subunits MPPalpha1 (or MPPalpha2) and MPPB, and 5 low-molecular weight protein subunits QCR7-1 (or QCR7-2), UCRQ-1 (or UCRQ-2), QCR9, UCRY and probably QCR6-1 (or QCR6-2). The complex exists as an obligatory dimer and forms supercomplexes (SCs) in the inner mitochondrial membrane with NADH-ubiquinone oxidoreductase (complex I, CI), resulting in different assemblies (supercomplexes SCI(1)III(2) and SCI(2)III(4)).

It is found in the mitochondrion inner membrane. Its function is as follows. Component of the ubiquinol-cytochrome c oxidoreductase, a multisubunit transmembrane complex that is part of the mitochondrial electron transport chain which drives oxidative phosphorylation. The respiratory chain contains 3 multisubunit complexes succinate dehydrogenase (complex II, CII), ubiquinol-cytochrome c oxidoreductase (cytochrome b-c1 complex, complex III, CIII) and cytochrome c oxidase (complex IV, CIV), that cooperate to transfer electrons derived from NADH and succinate to molecular oxygen, creating an electrochemical gradient over the inner membrane that drives transmembrane transport and the ATP synthase. The cytochrome b-c1 complex catalyzes electron transfer from ubiquinol to cytochrome c, linking this redox reaction to translocation of protons across the mitochondrial inner membrane, with protons being carried across the membrane as hydrogens on the quinol. In the process called Q cycle, 2 protons are consumed from the matrix, 4 protons are released into the intermembrane space and 2 electrons are passed to cytochrome c. The polypeptide is Cytochrome b-c1 complex subunit 8-1, mitochondrial (UCRQ-1) (Arabidopsis thaliana (Mouse-ear cress)).